A 374-amino-acid chain; its full sequence is Queuine tRNA-ribosyltransferase (374 aa).

Residue aspartate 89 is the Proton acceptor of the active site. Substrate-binding positions include aspartate 89–phenylalanine 93, aspartate 143, glutamine 187, and glycine 214. The segment at glycine 245–aspartate 251 is RNA binding. The Nucleophile role is filled by aspartate 264. The interval threonine 269–arginine 273 is RNA binding; important for wobble base 34 recognition. Zn(2+)-binding residues include cysteine 302, cysteine 304, cysteine 307, and histidine 333.

Belongs to the queuine tRNA-ribosyltransferase family. Homodimer. Within each dimer, one monomer is responsible for RNA recognition and catalysis, while the other monomer binds to the replacement base PreQ1. Zn(2+) is required as a cofactor.

The catalysed reaction is 7-aminomethyl-7-carbaguanine + guanosine(34) in tRNA = 7-aminomethyl-7-carbaguanosine(34) in tRNA + guanine. It participates in tRNA modification; tRNA-queuosine biosynthesis. Catalyzes the base-exchange of a guanine (G) residue with the queuine precursor 7-aminomethyl-7-deazaguanine (PreQ1) at position 34 (anticodon wobble position) in tRNAs with GU(N) anticodons (tRNA-Asp, -Asn, -His and -Tyr). Catalysis occurs through a double-displacement mechanism. The nucleophile active site attacks the C1' of nucleotide 34 to detach the guanine base from the RNA, forming a covalent enzyme-RNA intermediate. The proton acceptor active site deprotonates the incoming PreQ1, allowing a nucleophilic attack on the C1' of the ribose to form the product. After dissociation, two additional enzymatic reactions on the tRNA convert PreQ1 to queuine (Q), resulting in the hypermodified nucleoside queuosine (7-(((4,5-cis-dihydroxy-2-cyclopenten-1-yl)amino)methyl)-7-deazaguanosine). The protein is Queuine tRNA-ribosyltransferase of Shewanella oneidensis (strain ATCC 700550 / JCM 31522 / CIP 106686 / LMG 19005 / NCIMB 14063 / MR-1).